A 169-amino-acid polypeptide reads, in one-letter code: uncharacterized protein (169 aa).

This is an uncharacterized protein from Azospirillum brasilense.